A 213-amino-acid chain; its full sequence is Ribosomal RNA small subunit methyltransferase G (213 aa).

S-adenosyl-L-methionine-binding positions include glycine 81, leucine 86, 132–133, and arginine 147; that span reads VE.

This sequence belongs to the methyltransferase superfamily. RNA methyltransferase RsmG family.

The protein resides in the cytoplasm. The enzyme catalyses guanosine(527) in 16S rRNA + S-adenosyl-L-methionine = N(7)-methylguanosine(527) in 16S rRNA + S-adenosyl-L-homocysteine. Functionally, specifically methylates the N7 position of guanine in position 527 of 16S rRNA. The protein is Ribosomal RNA small subunit methyltransferase G of Mannheimia succiniciproducens (strain KCTC 0769BP / MBEL55E).